The primary structure comprises 354 residues: Uroporphyrinogen decarboxylase (354 aa).

Substrate contacts are provided by residues 27–31 (RQAGR), Asp77, Tyr154, Ser209, and His327.

Belongs to the uroporphyrinogen decarboxylase family. In terms of assembly, homodimer.

The protein localises to the cytoplasm. The catalysed reaction is uroporphyrinogen III + 4 H(+) = coproporphyrinogen III + 4 CO2. Its pathway is porphyrin-containing compound metabolism; protoporphyrin-IX biosynthesis; coproporphyrinogen-III from 5-aminolevulinate: step 4/4. Its function is as follows. Catalyzes the decarboxylation of four acetate groups of uroporphyrinogen-III to yield coproporphyrinogen-III. The protein is Uroporphyrinogen decarboxylase of Pseudoalteromonas translucida (strain TAC 125).